Reading from the N-terminus, the 314-residue chain is Porphobilinogen deaminase (314 aa).

S-(dipyrrolylmethanemethyl)cysteine is present on Cys249.

The protein belongs to the HMBS family. Monomer. Requires dipyrromethane as cofactor.

The enzyme catalyses 4 porphobilinogen + H2O = hydroxymethylbilane + 4 NH4(+). Its pathway is porphyrin-containing compound metabolism; protoporphyrin-IX biosynthesis; coproporphyrinogen-III from 5-aminolevulinate: step 2/4. Its function is as follows. Tetrapolymerization of the monopyrrole PBG into the hydroxymethylbilane pre-uroporphyrinogen in several discrete steps. The polypeptide is Porphobilinogen deaminase (Brucella abortus (strain S19)).